A 388-amino-acid chain; its full sequence is Succinate--CoA ligase [ADP-forming] subunit beta (388 aa).

The 236-residue stretch at 9–244 folds into the ATP-grasp domain; that stretch reads KDLLVSYDIA…PSQENVRDVL (236 aa). ATP is bound by residues Lys-46, 53–55, Val-102, and Glu-107; that span reads GRG. Mg(2+) contacts are provided by Asn-199 and Asp-213. Substrate is bound by residues Asn-264 and 321 to 323; that span reads GIM.

Belongs to the succinate/malate CoA ligase beta subunit family. In terms of assembly, heterotetramer of two alpha and two beta subunits. Mg(2+) serves as cofactor.

The enzyme catalyses succinate + ATP + CoA = succinyl-CoA + ADP + phosphate. It carries out the reaction GTP + succinate + CoA = succinyl-CoA + GDP + phosphate. Its pathway is carbohydrate metabolism; tricarboxylic acid cycle; succinate from succinyl-CoA (ligase route): step 1/1. Succinyl-CoA synthetase functions in the citric acid cycle (TCA), coupling the hydrolysis of succinyl-CoA to the synthesis of either ATP or GTP and thus represents the only step of substrate-level phosphorylation in the TCA. The beta subunit provides nucleotide specificity of the enzyme and binds the substrate succinate, while the binding sites for coenzyme A and phosphate are found in the alpha subunit. The sequence is that of Succinate--CoA ligase [ADP-forming] subunit beta from Chlamydia caviae (strain ATCC VR-813 / DSM 19441 / 03DC25 / GPIC) (Chlamydophila caviae).